Reading from the N-terminus, the 234-residue chain is Segregation and condensation protein A (234 aa).

Belongs to the ScpA family. In terms of assembly, component of a cohesin-like complex composed of ScpA, ScpB and the Smc homodimer, in which ScpA and ScpB bind to the head domain of Smc. The presence of the three proteins is required for the association of the complex with DNA.

Its subcellular location is the cytoplasm. In terms of biological role, participates in chromosomal partition during cell division. May act via the formation of a condensin-like complex containing Smc and ScpB that pull DNA away from mid-cell into both cell halves. The protein is Segregation and condensation protein A of Streptococcus pyogenes serotype M12 (strain MGAS2096).